An 874-amino-acid polypeptide reads, in one-letter code: Alanine--tRNA ligase (874 aa).

Residues His-562, His-566, Cys-663, and His-667 each contribute to the Zn(2+) site.

It belongs to the class-II aminoacyl-tRNA synthetase family. Zn(2+) is required as a cofactor.

It localises to the cytoplasm. It carries out the reaction tRNA(Ala) + L-alanine + ATP = L-alanyl-tRNA(Ala) + AMP + diphosphate. Its function is as follows. Catalyzes the attachment of alanine to tRNA(Ala) in a two-step reaction: alanine is first activated by ATP to form Ala-AMP and then transferred to the acceptor end of tRNA(Ala). Also edits incorrectly charged Ser-tRNA(Ala) and Gly-tRNA(Ala) via its editing domain. The chain is Alanine--tRNA ligase from Bordetella bronchiseptica (strain ATCC BAA-588 / NCTC 13252 / RB50) (Alcaligenes bronchisepticus).